We begin with the raw amino-acid sequence, 122 residues long: uncharacterized protein (122 aa).

Residue Thr55 is modified to Phosphothreonine. Residues Ser72, Ser86, Ser96, Ser112, and Ser118 each carry the phosphoserine modification.

The protein resides in the cytoplasm. This is an uncharacterized protein from Homo sapiens (Human).